The primary structure comprises 207 residues: Small ribosomal subunit protein uS4 (207 aa).

Positions 31-55 are disordered; the sequence is KCKLDSKPGQHGRTSGARTSDYGTQ. Positions 42–53 are enriched in polar residues; it reads GRTSGARTSDYG. Residues 97–160 form the S4 RNA-binding domain; that stretch reads SRLDNVVYRM…KKQARIVEAL (64 aa).

The protein belongs to the universal ribosomal protein uS4 family. Part of the 30S ribosomal subunit. Contacts protein S5. The interaction surface between S4 and S5 is involved in control of translational fidelity.

One of the primary rRNA binding proteins, it binds directly to 16S rRNA where it nucleates assembly of the body of the 30S subunit. Its function is as follows. With S5 and S12 plays an important role in translational accuracy. This chain is Small ribosomal subunit protein uS4, found in Burkholderia ambifaria (strain ATCC BAA-244 / DSM 16087 / CCUG 44356 / LMG 19182 / AMMD) (Burkholderia cepacia (strain AMMD)).